The primary structure comprises 215 residues: Protein N-lysine methyltransferase METTL21A (215 aa).

Residues tryptophan 47, 73–75 (GAG), aspartate 94, tryptophan 125, and alanine 141 contribute to the S-adenosyl-L-methionine site.

Belongs to the methyltransferase superfamily. METTL21 family.

Its subcellular location is the cytoplasm. The enzyme catalyses L-lysyl-[protein] + 3 S-adenosyl-L-methionine = N(6),N(6),N(6)-trimethyl-L-lysyl-[protein] + 3 S-adenosyl-L-homocysteine + 3 H(+). Functionally, protein-lysine methyltransferase that selectively trimethylates residues in heat shock protein 70 (HSP70) family members. This is Protein N-lysine methyltransferase METTL21A (mettl21a) from Xenopus tropicalis (Western clawed frog).